The sequence spans 813 residues: Glycerol-3-phosphate acyltransferase (813 aa).

Positions 304 to 309 (CHRSHI) match the HXXXXD motif motif.

This sequence belongs to the GPAT/DAPAT family.

The protein localises to the cell inner membrane. It catalyses the reaction sn-glycerol 3-phosphate + an acyl-CoA = a 1-acyl-sn-glycero-3-phosphate + CoA. It functions in the pathway phospholipid metabolism; CDP-diacylglycerol biosynthesis; CDP-diacylglycerol from sn-glycerol 3-phosphate: step 1/3. This Actinobacillus succinogenes (strain ATCC 55618 / DSM 22257 / CCUG 43843 / 130Z) protein is Glycerol-3-phosphate acyltransferase.